We begin with the raw amino-acid sequence, 362 residues long: Phosphoserine aminotransferase (362 aa).

Residues Ser-9 and Arg-42 each coordinate L-glutamate. Residues Gly-76–Arg-77, Trp-102, Thr-153, Asp-174, and Gln-197 each bind pyridoxal 5'-phosphate. Lys-198 is subject to N6-(pyridoxal phosphate)lysine. Asn-239 to Thr-240 is a pyridoxal 5'-phosphate binding site.

This sequence belongs to the class-V pyridoxal-phosphate-dependent aminotransferase family. SerC subfamily. Homodimer. Pyridoxal 5'-phosphate serves as cofactor.

The protein localises to the cytoplasm. It catalyses the reaction O-phospho-L-serine + 2-oxoglutarate = 3-phosphooxypyruvate + L-glutamate. It carries out the reaction 4-(phosphooxy)-L-threonine + 2-oxoglutarate = (R)-3-hydroxy-2-oxo-4-phosphooxybutanoate + L-glutamate. The protein operates within amino-acid biosynthesis; L-serine biosynthesis; L-serine from 3-phospho-D-glycerate: step 2/3. It participates in cofactor biosynthesis; pyridoxine 5'-phosphate biosynthesis; pyridoxine 5'-phosphate from D-erythrose 4-phosphate: step 3/5. Its function is as follows. Catalyzes the reversible conversion of 3-phosphohydroxypyruvate to phosphoserine and of 3-hydroxy-2-oxo-4-phosphonooxybutanoate to phosphohydroxythreonine. The protein is Phosphoserine aminotransferase of Salmonella agona (strain SL483).